Consider the following 308-residue polypeptide: Transmembrane and ubiquitin-like domain-containing protein 1 (308 aa).

The helical transmembrane segment at 11–31 threads the bilayer; sequence VTVLFALVLFFMVLMLAWVST. Positions 39 to 162 are disordered; sequence THWIRPEPAQ…GLGDGTTAQS (124 aa). The span at 63-93 shows a compositional bias: polar residues; that stretch reads PSQTLTNADPNSETVDSSDSTQSSREFQNAG. Residues 103 to 115 show a composition bias toward low complexity; it reads SSSGSTVSTGGSV. The segment covering 132–149 has biased composition (polar residues); that stretch reads PNFTVSSRDPQAGASSSL. The Ubiquitin-like domain occupies 169–242; it reads IHLRLKFLND…LHCHISQHAS (74 aa). 2 consecutive transmembrane segments (helical) span residues 253–273 and 283–303; these read VPLN…MLLW and FTGT…AIAF.

The protein resides in the membrane. Its subcellular location is the cytoplasm. It is found in the nucleus. May contribute to the regulation of translation during cell-cycle progression. May contribute to the regulation of cell proliferation. The membrane form is involved in sterol-regulated ubiquitination and degradation of HMG-CoA reductase HMGCR. May be involved in centrosome assembly. In Xenopus laevis (African clawed frog), this protein is Transmembrane and ubiquitin-like domain-containing protein 1 (tmub1).